Reading from the N-terminus, the 38-residue chain is DNA binding protein VP8 (38 aa).

Over residues 1–16 the composition is skewed to basic residues; sequence MKRKPMSRKASQKTFK. The interval 1–38 is disordered; the sequence is MKRKPMSRKASQKTFKKNTGVQRMNHLNPRAMRGGIRL.

This sequence belongs to the microviridae J protein family.

It is found in the virion. The protein localises to the host cytoplasm. Functionally, mediates ssDNA packaging into virion, it locates to the internal surface of the capsid, thereby displacing the internal scaffolding protein VP3 during virion formation. Additionally, protein VP8 plays a role in viral attachment to the host cell. The protein is DNA binding protein VP8 of Bdellovibrio phage phiMH2K (Bacteriophage phiMH2K).